A 431-amino-acid chain; its full sequence is Glutamate-1-semialdehyde 2,1-aminomutase (431 aa).

K270 is subject to N6-(pyridoxal phosphate)lysine.

Belongs to the class-III pyridoxal-phosphate-dependent aminotransferase family. HemL subfamily. Homodimer. The cofactor is pyridoxal 5'-phosphate.

It is found in the cytoplasm. It carries out the reaction (S)-4-amino-5-oxopentanoate = 5-aminolevulinate. It functions in the pathway porphyrin-containing compound metabolism; protoporphyrin-IX biosynthesis; 5-aminolevulinate from L-glutamyl-tRNA(Glu): step 2/2. This is Glutamate-1-semialdehyde 2,1-aminomutase from Limosilactobacillus reuteri subsp. reuteri (strain JCM 1112) (Lactobacillus reuteri).